The primary structure comprises 352 residues: Ferrochelatase (352 aa).

Histidine 222 and glutamate 303 together coordinate Fe cation.

Belongs to the ferrochelatase family.

It is found in the cytoplasm. It catalyses the reaction heme b + 2 H(+) = protoporphyrin IX + Fe(2+). It participates in porphyrin-containing compound metabolism; protoheme biosynthesis; protoheme from protoporphyrin-IX: step 1/1. In terms of biological role, catalyzes the ferrous insertion into protoporphyrin IX. This chain is Ferrochelatase, found in Brucella melitensis biotype 2 (strain ATCC 23457).